A 379-amino-acid chain; its full sequence is Cytochrome b (379 aa).

4 helical membrane-spanning segments follow: residues 33–53 (FGSLLGICLAVQILTGLFLAM), 77–98 (WILRYLHANGASMFFICLYIHV), 113–133 (WNIGVILLFAVMATAFMGYVL), and 178–198 (FFAFHFLLPFIISAMVMVHLL). Positions 83 and 97 each coordinate heme b. Heme b contacts are provided by H182 and H196. H201 serves as a coordination point for a ubiquinone. Transmembrane regions (helical) follow at residues 226-246 (IKDILGLLLMIMVLLMLVLFS), 288-308 (LGGVMALVLSILILIIIPVLH), 320-340 (LSQCLFWLLVADLLXVTWIGG), and 347-367 (YVIXGQLASIXXXXIXIXXXX).

The protein belongs to the cytochrome b family. The cytochrome bc1 complex contains 11 subunits: 3 respiratory subunits (MT-CYB, CYC1 and UQCRFS1), 2 core proteins (UQCRC1 and UQCRC2) and 6 low-molecular weight proteins (UQCRH/QCR6, UQCRB/QCR7, UQCRQ/QCR8, UQCR10/QCR9, UQCR11/QCR10 and a cleavage product of UQCRFS1). This cytochrome bc1 complex then forms a dimer. Heme b serves as cofactor.

The protein resides in the mitochondrion inner membrane. Functionally, component of the ubiquinol-cytochrome c reductase complex (complex III or cytochrome b-c1 complex) that is part of the mitochondrial respiratory chain. The b-c1 complex mediates electron transfer from ubiquinol to cytochrome c. Contributes to the generation of a proton gradient across the mitochondrial membrane that is then used for ATP synthesis. The polypeptide is Cytochrome b (MT-CYB) (Myotis goudotii (Malagasy mouse-eared bat)).